The primary structure comprises 180 residues: Sperm protein associated with the nucleus on the X chromosome N2 (180 aa).

2 disordered regions span residues Met-1 to Thr-46 and Asn-64 to Asp-180. Residues Gly-10 to Glu-26 are compositionally biased toward basic and acidic residues. The span at Gln-82 to Ser-169 shows a compositional bias: acidic residues. Over residues Ser-170 to Asp-180 the composition is skewed to low complexity.

It belongs to the SPAN-X family.

The sequence is that of Sperm protein associated with the nucleus on the X chromosome N2 (SPANXN2) from Homo sapiens (Human).